Consider the following 255-residue polypeptide: Uracil-DNA glycosylase (255 aa).

The interval Met-1 to Pro-20 is disordered. The Proton acceptor role is filled by Asp-99.

It belongs to the uracil-DNA glycosylase (UDG) superfamily. UNG family.

Its subcellular location is the host nucleus. The catalysed reaction is Hydrolyzes single-stranded DNA or mismatched double-stranded DNA and polynucleotides, releasing free uracil.. Functionally, excises uracil residues from the DNA which can arise as a result of misincorporation of dUMP residues by DNA polymerase or deamination of cytosines. Therefore may reduce deleterious uracil incorporation into the viral genome, particularly in terminally differentiated cells which lack DNA repair enzymes. In Human herpesvirus 2 (strain HG52) (HHV-2), this protein is Uracil-DNA glycosylase.